A 303-amino-acid polypeptide reads, in one-letter code: 2-dehydropantoate 2-reductase (303 aa).

NADP(+) is bound by residues 7-12 (GCGALG), Asn-98, and Ala-122. Asn-98 contributes to the substrate binding site. Lys-176 (proton donor) is an active-site residue. The substrate site is built by Asn-180, Asn-184, Asn-194, and Ser-244. NADP(+) is bound at residue Glu-256.

It belongs to the ketopantoate reductase family. As to quaternary structure, monomer.

The protein resides in the cytoplasm. It catalyses the reaction (R)-pantoate + NADP(+) = 2-dehydropantoate + NADPH + H(+). The protein operates within cofactor biosynthesis; (R)-pantothenate biosynthesis; (R)-pantoate from 3-methyl-2-oxobutanoate: step 2/2. In terms of biological role, catalyzes the NADPH-dependent reduction of ketopantoate into pantoic acid. This chain is 2-dehydropantoate 2-reductase (panE), found in Shigella flexneri.